The sequence spans 201 residues: MAEKFTQHTGLVVPLDAANIDTDAIIPKQFLQKVTRTGFGAHLFNDWRFLDEKGQQPNPEFVLNFPEYQGASILLARENFGCGSSREHAPWALTDYGFKVVIAPSFADIFYGNSFNNQLLPVTLSDAQVDELFALVKANPGIKFEVDLEAQVVKAGDKTYSFKIDDFRRHCMLNGLDSIGLTLQHEDAIAAYENKQPAFMR.

It belongs to the LeuD family. LeuD type 1 subfamily. As to quaternary structure, heterodimer of LeuC and LeuD.

The catalysed reaction is (2R,3S)-3-isopropylmalate = (2S)-2-isopropylmalate. It functions in the pathway amino-acid biosynthesis; L-leucine biosynthesis; L-leucine from 3-methyl-2-oxobutanoate: step 2/4. In terms of biological role, catalyzes the isomerization between 2-isopropylmalate and 3-isopropylmalate, via the formation of 2-isopropylmaleate. The protein is 3-isopropylmalate dehydratase small subunit of Salmonella schwarzengrund (strain CVM19633).